We begin with the raw amino-acid sequence, 84 residues long: Cell division topological specificity factor (84 aa).

It belongs to the MinE family.

In terms of biological role, prevents the cell division inhibition by proteins MinC and MinD at internal division sites while permitting inhibition at polar sites. This ensures cell division at the proper site by restricting the formation of a division septum at the midpoint of the long axis of the cell. This Pseudomonas putida (strain ATCC 700007 / DSM 6899 / JCM 31910 / BCRC 17059 / LMG 24140 / F1) protein is Cell division topological specificity factor.